The following is a 359-amino-acid chain: ELAV-like protein 2 (359 aa).

Residues 1–33 (METQLSNGPTCNNTANGPTTINNNCSSPVDSGN) are disordered. RRM domains follow at residues 39 to 117 (TNLI…YARP) and 125 to 205 (ANLY…FANN). S221 carries the post-translational modification Phosphoserine. The region spanning 276 to 354 (WCIFVYNLAP…RVLQVSFKTN (79 aa)) is the RRM 3 domain.

This sequence belongs to the RRM elav family. In terms of assembly, interacts with IGF2BP1. Interacts with MAP1B light chain LC1.

RNA-binding protein that binds to the 3' untranslated region (3'UTR) of target mRNAs. Seems to recognize a GAAA motif. Can bind to its own 3'UTR, the FOS 3'UTR and the ID 3'UTR. The sequence is that of ELAV-like protein 2 (ELAVL2) from Pongo abelii (Sumatran orangutan).